Reading from the N-terminus, the 275-residue chain is NH(3)-dependent NAD(+) synthetase (275 aa).

Gly47–Ser54 is an ATP binding site. Asp53 serves as a coordination point for Mg(2+). Position 141 (Arg141) interacts with deamido-NAD(+). Residue Thr161 participates in ATP binding. Glu166 contacts Mg(2+). Positions 174 and 181 each coordinate deamido-NAD(+). ATP is bound by residues Lys190 and Thr212. A deamido-NAD(+)-binding site is contributed by His261 to Lys262.

Belongs to the NAD synthetase family. Homodimer.

It catalyses the reaction deamido-NAD(+) + NH4(+) + ATP = AMP + diphosphate + NAD(+) + H(+). The protein operates within cofactor biosynthesis; NAD(+) biosynthesis; NAD(+) from deamido-NAD(+) (ammonia route): step 1/1. In terms of biological role, catalyzes the ATP-dependent amidation of deamido-NAD to form NAD. Uses ammonia as a nitrogen source. The chain is NH(3)-dependent NAD(+) synthetase from Lacticaseibacillus casei (strain BL23) (Lactobacillus casei).